Here is a 380-residue protein sequence, read N- to C-terminus: MASVAELKEKHAAATASVNSLRERLRQRRQMLLDTDVERYSRTQGRTPVSFNPTDLVCCRTLQGHSGKVYSLDWTPEKNWIVSASQDGRLIVWNALTSQKTHAIKLHCPWVMTCAFAPNGQSVACGGLDSACSIFNLNSQADRDGNIPVSRILTGHKGYVSSCQYVPDQETRLITSSGDQTCVLWDVTTGQRISIFGGEFPSGHTADVLSLSINSSISNMFVSGSCDATVRLWDIRIASRAVRTYHGHEGDINSVKFFPDGQRFGTGSDDGTCRLFDVRTGHQLQVYSREPDRNDNELPTVTSIAFSISGRLLFAGYSNGDCYVWDTLLAEVVLNLGNLQNSHEGRISCLGLSSDGSALCTGSWDKNLKIWAFSGHRKIV.

7 WD repeats span residues 64-103 (GHSGKVYSLDWTPEKNWIVSASQDGRLIVWNALTSQKTHA), 106-145 (LHCPWVMTCAFAPNGQSVACGGLDSACSIFNLNSQADRDG), 155-195 (GHKG…RISI), 203-243 (GHTA…RAVR), 247-286 (GHEGDINSVKFFPDGQRFGTGSDDGTCRLFDVRTGHQLQV), 296-335 (NELPTVTSIAFSISGRLLFAGYSNGDCYVWDTLLAEVVLN), and 342-380 (SHEGRISCLGLSSDGSALCTGSWDKNLKIWAFSGHRKIV).

Belongs to the WD repeat G protein beta family. In terms of assembly, g proteins are composed of 3 units, alpha, beta and gamma. Interacts with the gamma subunits RGG1 and RGG2.

Its subcellular location is the cell membrane. In terms of biological role, guanine nucleotide-binding proteins (G proteins) are involved as modulators or transducers in various transmembrane signaling systems. The beta and gamma chains are required for the GTPase activity, for replacement of GDP by GTP, and for G protein-effector interaction. In Oryza sativa subsp. indica (Rice), this protein is Guanine nucleotide-binding protein subunit beta.